The primary structure comprises 475 residues: NADH-quinone oxidoreductase subunit N (475 aa).

A run of 14 helical transmembrane segments spans residues isoleucine 7 to glycine 27, leucine 40 to aspartate 60, phenylalanine 74 to glycine 94, phenylalanine 105 to asparagine 125, leucine 127 to phenylalanine 147, tyrosine 161 to glycine 181, isoleucine 191 to leucine 211, alanine 242 to tyrosine 262, tryptophan 266 to leucine 286, leucine 295 to valine 315, valine 321 to alanine 341, leucine 365 to phenylalanine 385, glutamate 399 to leucine 419, and glycine 448 to isoleucine 468.

It belongs to the complex I subunit 2 family. In terms of assembly, NDH-1 is composed of 14 different subunits. Subunits NuoA, H, J, K, L, M, N constitute the membrane sector of the complex.

Its subcellular location is the cell inner membrane. The enzyme catalyses a quinone + NADH + 5 H(+)(in) = a quinol + NAD(+) + 4 H(+)(out). In terms of biological role, NDH-1 shuttles electrons from NADH, via FMN and iron-sulfur (Fe-S) centers, to quinones in the respiratory chain. The immediate electron acceptor for the enzyme in this species is believed to be ubiquinone. Couples the redox reaction to proton translocation (for every two electrons transferred, four hydrogen ions are translocated across the cytoplasmic membrane), and thus conserves the redox energy in a proton gradient. The sequence is that of NADH-quinone oxidoreductase subunit N from Hirschia baltica (strain ATCC 49814 / DSM 5838 / IFAM 1418).